We begin with the raw amino-acid sequence, 862 residues long: Protein translocase subunit SecA (862 aa).

ATP is bound by residues Q86, 104 to 108 (GEGKT), and D499. C848, C850, C859, and H860 together coordinate Zn(2+).

It belongs to the SecA family. In terms of assembly, monomer and homodimer. Part of the essential Sec protein translocation apparatus which comprises SecA, SecYEG and auxiliary proteins SecDF-YajC and YidC. The cofactor is Zn(2+).

It is found in the cell inner membrane. Its subcellular location is the cytoplasm. The catalysed reaction is ATP + H2O + cellular proteinSide 1 = ADP + phosphate + cellular proteinSide 2.. Functionally, part of the Sec protein translocase complex. Interacts with the SecYEG preprotein conducting channel. Has a central role in coupling the hydrolysis of ATP to the transfer of proteins into and across the cell membrane, serving both as a receptor for the preprotein-SecB complex and as an ATP-driven molecular motor driving the stepwise translocation of polypeptide chains across the membrane. The chain is Protein translocase subunit SecA from Ehrlichia canis (strain Jake).